We begin with the raw amino-acid sequence, 901 residues long: Protein translocase subunit SecA (901 aa).

ATP is bound by residues Gln89, 107 to 111, and Asp502; that span reads GEGKT. The Zn(2+) site is built by Cys884, Cys886, Cys895, and His896.

This sequence belongs to the SecA family. As to quaternary structure, monomer and homodimer. Part of the essential Sec protein translocation apparatus which comprises SecA, SecYEG and auxiliary proteins SecDF-YajC and YidC. Zn(2+) is required as a cofactor.

The protein localises to the cell inner membrane. It localises to the cytoplasm. The enzyme catalyses ATP + H2O + cellular proteinSide 1 = ADP + phosphate + cellular proteinSide 2.. Functionally, part of the Sec protein translocase complex. Interacts with the SecYEG preprotein conducting channel. Has a central role in coupling the hydrolysis of ATP to the transfer of proteins into and across the cell membrane, serving both as a receptor for the preprotein-SecB complex and as an ATP-driven molecular motor driving the stepwise translocation of polypeptide chains across the membrane. This chain is Protein translocase subunit SecA, found in Sinorhizobium fredii (strain NBRC 101917 / NGR234).